The primary structure comprises 282 residues: Large ribosomal subunit protein uL2 (282 aa).

Residues 230–282 (AMNPIDHPLGGGEGRSSGGRHPVSPWGMPAKGYKTRDKKKASSRLIVKRRGQK) are disordered. The segment covering 265-282 (RDKKKASSRLIVKRRGQK) has biased composition (basic residues).

The protein belongs to the universal ribosomal protein uL2 family. In terms of assembly, part of the 50S ribosomal subunit. Forms a bridge to the 30S subunit in the 70S ribosome.

One of the primary rRNA binding proteins. Required for association of the 30S and 50S subunits to form the 70S ribosome, for tRNA binding and peptide bond formation. It has been suggested to have peptidyltransferase activity; this is somewhat controversial. Makes several contacts with the 16S rRNA in the 70S ribosome. In Desulfovibrio desulfuricans (strain ATCC 27774 / DSM 6949 / MB), this protein is Large ribosomal subunit protein uL2.